We begin with the raw amino-acid sequence, 1007 residues long: Serine/threonine-protein kinase PRP4 homolog (1007 aa).

A disordered region spans residues 1–102 (MAATEPPSLR…LSPAKRTKLD (102 aa)). Alanine 2 bears the N-acetylalanine mark. Residues serine 8, serine 21, serine 24, and serine 33 each carry the phosphoserine modification. Basic residues-rich tracts occupy residues 40–60 (KHSR…KHKH) and 68–82 (KKHK…HKRK). Basic and acidic residues predominate over residues 83–92 (EVIEASDKEG). Phosphoserine is present on residues serine 88 and serine 94. Position 100 is an N6-acetyllysine; alternate (lysine 100). Residue lysine 100 forms a Glycyl lysine isopeptide (Lys-Gly) (interchain with G-Cter in SUMO2); alternate linkage. Residue lysine 112 forms a Glycyl lysine isopeptide (Lys-Gly) (interchain with G-Cter in SUMO2) linkage. Residue lysine 118 forms a Glycyl lysine isopeptide (Lys-Gly) (interchain with G-Cter in SUMO2); alternate linkage. Lysine 118 is covalently cross-linked (Glycyl lysine isopeptide (Lys-Gly) (interchain with G-Cter in SUMO1); alternate). Position 132 is a phosphoserine (serine 132). Tyrosine 141 bears the Phosphotyrosine mark. Disordered regions lie at residues 141–535 (YESG…EDEE) and 560–583 (NISV…SPDD). 3 positions are modified to phosphoserine: serine 143, serine 145, and serine 167. A compositionally biased stretch (low complexity) spans 158-169 (GNRSSTRSSSTR). Residues lysine 171 and lysine 178 each participate in a glycyl lysine isopeptide (Lys-Gly) (interchain with G-Cter in SUMO2) cross-link. Composition is skewed to basic residues over residues 180–203 (SAKK…RKSK) and 215–231 (RSKS…SKRS). A phosphoserine mark is found at serine 240, serine 242, serine 258, serine 278, serine 292, and serine 294. Over residues 248-271 (RSQEKVGKARSPAEEKMKSEEKGK) the composition is skewed to basic and acidic residues. Residues 294–303 (SPVDLRDKSK) show a composition bias toward basic and acidic residues. The span at 304-315 (DRRSRSKERKSK) shows a compositional bias: basic residues. The span at 316-325 (RSEIDKEKKP) shows a compositional bias: basic and acidic residues. A phosphoserine mark is found at serine 328, serine 354, serine 356, serine 366, and serine 368. The span at 342–367 (PSRRPGRSPKRRSLSPKLRDKSRRSR) shows a compositional bias: basic residues. Residue threonine 385 is modified to Phosphothreonine. Phosphoserine is present on serine 387. Composition is skewed to basic and acidic residues over residues 395-408 (RSLE…ERRR) and 415-429 (RPRD…RSKD). Phosphoserine occurs at positions 427, 431, and 437. The segment covering 438-497 (PTRRRSRSPIRRRSRSPLRRSRSPRRRSRSPRRRDRSRRSRSRLRRRSRSRGGHRRRSRS) has biased composition (basic residues). Serine 518, serine 519, serine 520, serine 565, serine 569, serine 576, serine 578, and serine 580 each carry phosphoserine. The segment covering 518-535 (SSSDDNLEDFDVEEEDEE) has biased composition (acidic residues). The segment covering 562–581 (SVPSEPSSPQSSTRSRSPSP) has biased composition (low complexity). Residues lysine 593 and lysine 659 each participate in a glycyl lysine isopeptide (Lys-Gly) (interchain with G-Cter in SUMO2) cross-link. A Protein kinase domain is found at 687 to 1006 (YNVYGYTGQG…ALQHAFIQEK (320 aa)). ATP is bound by residues 693 to 701 (TGQGVFSNV) and lysine 717. An N6-acetyllysine modification is found at lysine 717. Aspartate 815 functions as the Proton acceptor in the catalytic mechanism. Tyrosine 849 bears the Phosphotyrosine mark. Phosphoserine is present on serine 852.

The protein belongs to the protein kinase superfamily. CMGC Ser/Thr protein kinase family. Interacts with CLK1 C-terminus. Associates with the U5 snRNP and NCOR1 deacetylase complexes. Identified in the spliceosome C complex. Phosphorylated by CLK1. Autophosphorylated; phosphorylation inhibits interaction with its targets, such as PRPF6 or SMARCA4.

It is found in the nucleus. Its subcellular location is the chromosome. The protein localises to the centromere. It localises to the kinetochore. It catalyses the reaction L-seryl-[protein] + ATP = O-phospho-L-seryl-[protein] + ADP + H(+). The catalysed reaction is L-threonyl-[protein] + ATP = O-phospho-L-threonyl-[protein] + ADP + H(+). Functionally, serine/threonine kinase involved in spliceosomal assembly as well as mitosis and signaling regulation. Connects chromatin mediated regulation of transcription and pre-mRNA splicing. During spliceosomal assembly, interacts with and phosphorylates PRPF6 and PRPF31, components of the U4/U6-U5 tri-small nuclear ribonucleoprotein (snRNP), to facilitate the formation of the spliceosome B complex. Plays a role in regulating transcription and the spindle assembly checkpoint (SAC). Associates with U5 snRNP and NCOR1 deacetylase complexes which may allow a coordination of pre-mRNA splicing with chromatin remodeling events involved in transcriptional regulation. Associates and probably phosphorylates SMARCA4 and NCOR1. Phosphorylates SRSF1. Associates with kinetochores during mitosis and is necessary for recruitment and maintenance of the checkpoint proteins such as MAD1L1 and MAD12L1 at the kinetochores. Phosphorylates and regulates the activity of the transcription factors such as ELK1 and KLF13. Phosphorylates nuclear YAP1 and WWTR1/TAZ which induces nuclear exclusion and regulates Hippo signaling pathway, involved in tissue growth control. This Mus musculus (Mouse) protein is Serine/threonine-protein kinase PRP4 homolog (Prp4k).